Here is a 39-residue protein sequence, read N- to C-terminus: Photosystem II reaction center protein X (39 aa).

A helical transmembrane segment spans residues 10 to 30 (WSLLWGTAIVVIPVTVGLIFI).

Belongs to the PsbX family. Type 1 subfamily. As to quaternary structure, PSII is composed of 1 copy each of membrane proteins PsbA, PsbB, PsbC, PsbD, PsbE, PsbF, PsbH, PsbI, PsbJ, PsbK, PsbL, PsbM, PsbT, PsbX, PsbY, PsbZ, Psb30/Ycf12, peripheral proteins PsbO, CyanoQ (PsbQ), PsbU, PsbV and a large number of cofactors. It forms dimeric complexes.

The protein localises to the cellular thylakoid membrane. Involved in the binding and/or turnover of quinones at the Q(B) site of photosystem II (PSII). PSII is a light-driven water plastoquinone oxidoreductase, using light energy to abstract electrons from H(2)O, generating a proton gradient subsequently used for ATP formation. The polypeptide is Photosystem II reaction center protein X (Nostoc punctiforme (strain ATCC 29133 / PCC 73102)).